The primary structure comprises 390 residues: Serine/threonine/tyrosine-protein kinase HT1 (390 aa).

In terms of domain architecture, Protein kinase spans 86–359; sequence LFIGNKFASG…GLPLTSHASL (274 aa). Residues 92 to 100 and Lys-113 each bind ATP; that span reads FASGAHSRI. The active-site Proton acceptor is Asp-212.

The protein belongs to the protein kinase superfamily. Ser/Thr protein kinase family. As to quaternary structure, interacts with DTX56. Binds to MPK4 and MPK12. Associates to CBC1 and CBC2. Autophosphorylated. Mainly localizes in guard cells. Expressed at low level in leaves, stems, roots and flowers.

The protein localises to the cell membrane. The enzyme catalyses L-seryl-[protein] + ATP = O-phospho-L-seryl-[protein] + ADP + H(+). It catalyses the reaction L-threonyl-[protein] + ATP = O-phospho-L-threonyl-[protein] + ADP + H(+). The catalysed reaction is L-tyrosyl-[protein] + ATP = O-phospho-L-tyrosyl-[protein] + ADP + H(+). Inhibited by MPK4 and MPK12. In terms of biological role, serine/threonine/tyrosine kinase involved in the control of stomatal movement in response to CO(2). Functions as a major negative regulator of CO(2)-induced stomatal closing. Does not seem to be involved in stomatal closure in response to abscisic acid (ABA) or light. Involved in the control of red light-induced stomatal opening. Is epistatic to SRK2E/OST1 function during stomatal responses to red light and altered CO(2). Phosphorylates SRK2E/OST1 and GHR1 to prevents SRK2E/OST1- and GHR1-induced activation of SLAC1, thus preventing stomatal closure. Mediates the phosphorylation of CBC1 and CBC2. The polypeptide is Serine/threonine/tyrosine-protein kinase HT1 (Arabidopsis thaliana (Mouse-ear cress)).